The sequence spans 238 residues: 15,16-dihydrobiliverdin:ferredoxin oxidoreductase (238 aa).

Belongs to the HY2 family.

The enzyme catalyses 15,16-dihydrobiliverdin + oxidized 2[4Fe-4S]-[ferredoxin] = biliverdin IXalpha + reduced 2[4Fe-4S]-[ferredoxin] + 2 H(+). Its function is as follows. Catalyzes the two-electron reduction of biliverdin IX-alpha at the C15 methine bridge. The polypeptide is 15,16-dihydrobiliverdin:ferredoxin oxidoreductase (Prochlorococcus marinus (strain NATL1A)).